The chain runs to 144 residues: Transcription antitermination protein NusB (144 aa).

The protein belongs to the NusB family.

Involved in transcription antitermination. Required for transcription of ribosomal RNA (rRNA) genes. Binds specifically to the boxA antiterminator sequence of the ribosomal RNA (rrn) operons. This chain is Transcription antitermination protein NusB, found in Streptomyces avermitilis (strain ATCC 31267 / DSM 46492 / JCM 5070 / NBRC 14893 / NCIMB 12804 / NRRL 8165 / MA-4680).